A 229-amino-acid chain; its full sequence is Triosephosphate isomerase (229 aa).

6–8 is a binding site for substrate; sequence NFK. The active-site Electrophile is the H88. Residue E157 is the Proton acceptor of the active site. Substrate-binding residues include G163 and S193.

Belongs to the triosephosphate isomerase family. In terms of assembly, homodimer.

Its subcellular location is the cytoplasm. The catalysed reaction is D-glyceraldehyde 3-phosphate = dihydroxyacetone phosphate. It functions in the pathway carbohydrate biosynthesis; gluconeogenesis. The protein operates within carbohydrate degradation; glycolysis; D-glyceraldehyde 3-phosphate from glycerone phosphate: step 1/1. In terms of biological role, involved in the gluconeogenesis. Catalyzes stereospecifically the conversion of dihydroxyacetone phosphate (DHAP) to D-glyceraldehyde-3-phosphate (G3P). The sequence is that of Triosephosphate isomerase from Sulfurovum sp. (strain NBC37-1).